Reading from the N-terminus, the 283-residue chain is Large ribosomal subunit protein uL2c (283 aa).

The interval 229 to 274 (GVVMNPIDHPHGGGEGKVPIGRKKPLTPWGHPALGRKSRKRRKYSD) is disordered. Residues 262-271 (LGRKSRKRRK) show a composition bias toward basic residues.

The protein belongs to the universal ribosomal protein uL2 family. Part of the 50S ribosomal subunit.

Its subcellular location is the plastid. This Aneura mirabilis (Parasitic liverwort) protein is Large ribosomal subunit protein uL2c (rpl2).